Reading from the N-terminus, the 353-residue chain is Mitochondrial import inner membrane translocase subunit TIM50 (353 aa).

The N-terminal 44 residues, 1-44, are a transit peptide targeting the mitochondrion; it reads MAASAAVFSRLRSGLRLGSRGLCTRLATPPRRAPDQAAEIGSRG. Residues 25-60 are disordered; the sequence is RLATPPRRAPDQAAEIGSRGSTKAQGPQQQPGSEGP. Residue Ser45 is modified to Phosphoserine. Topologically, residues 45 to 65 are mitochondrial matrix; it reads STKAQGPQQQPGSEGPSYAKK. Residues 49-60 are compositionally biased toward low complexity; the sequence is QGPQQQPGSEGP. The chain crosses the membrane as a helical span at residues 66–86; the sequence is VALWLAGLLGAGGTVSVVYIF. At 87–353 the chain is on the mitochondrial intermembrane side; sequence GNNPVDENGA…SRLWPRSKQP (267 aa). An FCP1 homology domain is found at 143 to 286; that stretch reads YYQPPYTLVL…LDLSAFLKTI (144 aa). Ser341 is subject to Phosphoserine.

The protein belongs to the TIM50 family. Component of the TIM23 complex at least composed of TIMM23, TIMM17 (TIMM17A or TIMM17B) and TIMM50; within this complex, directly interacts with TIMM23. The complex interacts with the TIMM44 component of the PAM complex and with DNAJC15. In terms of assembly, interacts with COIL and snRNPs. Widely expressed. Expressed at higher level in brain, kidney and liver (at protein level).

The protein localises to the mitochondrion inner membrane. It localises to the nucleus speckle. Its function is as follows. Essential component of the TIM23 complex, a complex that mediates the translocation of transit peptide-containing proteins across the mitochondrial inner membrane. Has some phosphatase activity in vitro; however such activity may not be relevant in vivo. Functionally, may participate in the release of snRNPs and SMN from the Cajal body. The polypeptide is Mitochondrial import inner membrane translocase subunit TIM50 (TIMM50) (Homo sapiens (Human)).